Here is a 369-residue protein sequence, read N- to C-terminus: Anhydro-N-acetylmuramic acid kinase (369 aa).

ATP is bound at residue 12 to 19 (GTSMDGVD).

Belongs to the anhydro-N-acetylmuramic acid kinase family.

The enzyme catalyses 1,6-anhydro-N-acetyl-beta-muramate + ATP + H2O = N-acetyl-D-muramate 6-phosphate + ADP + H(+). It functions in the pathway amino-sugar metabolism; 1,6-anhydro-N-acetylmuramate degradation. It participates in cell wall biogenesis; peptidoglycan recycling. In terms of biological role, catalyzes the specific phosphorylation of 1,6-anhydro-N-acetylmuramic acid (anhMurNAc) with the simultaneous cleavage of the 1,6-anhydro ring, generating MurNAc-6-P. Is required for the utilization of anhMurNAc either imported from the medium or derived from its own cell wall murein, and thus plays a role in cell wall recycling. The protein is Anhydro-N-acetylmuramic acid kinase of Shewanella sp. (strain MR-7).